The following is a 28-amino-acid chain: Phospholipase A2 pseudexin C chain (28 aa).

Tyr28 lines the Ca(2+) pocket.

The protein belongs to the phospholipase A2 family. Group I subfamily. Requires Ca(2+) as cofactor. As to expression, expressed by the venom gland.

It localises to the secreted. It carries out the reaction a 1,2-diacyl-sn-glycero-3-phosphocholine + H2O = a 1-acyl-sn-glycero-3-phosphocholine + a fatty acid + H(+). PLA2 catalyzes the calcium-dependent hydrolysis of the 2-acyl groups in 3-sn-phosphoglycerides. The chain is Phospholipase A2 pseudexin C chain from Pseudechis porphyriacus (Red-bellied black snake).